The sequence spans 47 residues: Large ribosomal subunit protein bL27c (47 aa).

Residues 1-21 (STKNGRDSNAQRLGVKKYGGE) form a disordered region.

This sequence belongs to the bacterial ribosomal protein bL27 family.

It is found in the plastid. It localises to the chloroplast. This Porphyridium purpureum (Red alga) protein is Large ribosomal subunit protein bL27c (rpl27).